Reading from the N-terminus, the 413-residue chain is Alpha-1-antitrypsin 1-1 (413 aa).

Residues methionine 1 to alanine 24 form the signal peptide. N-linked (GlcNAc...) asparagine glycans are attached at residues asparagine 64, asparagine 101, and asparagine 265. The interval alanine 368–histidine 387 is RCL.

It belongs to the serpin family.

The protein localises to the secreted. Functionally, inhibitor of serine proteases. Its primary target is elastase, but it also has a moderate affinity for plasmin and thrombin. In Mus musculus (Mouse), this protein is Alpha-1-antitrypsin 1-1 (Serpina1a).